Reading from the N-terminus, the 179-residue chain is tRNA (cytidine(56)-2'-O)-methyltransferase (179 aa).

Residues Leu82, 112–116, and 130–137 contribute to the S-adenosyl-L-methionine site; these read GAEKV and VGNQPHSE.

This sequence belongs to the aTrm56 family. In terms of assembly, homodimer.

It is found in the cytoplasm. It carries out the reaction cytidine(56) in tRNA + S-adenosyl-L-methionine = 2'-O-methylcytidine(56) in tRNA + S-adenosyl-L-homocysteine + H(+). Functionally, specifically catalyzes the AdoMet-dependent 2'-O-ribose methylation of cytidine at position 56 in tRNAs. In Methanococcus maripaludis (strain C7 / ATCC BAA-1331), this protein is tRNA (cytidine(56)-2'-O)-methyltransferase.